A 41-amino-acid chain; its full sequence is Large ribosomal subunit protein bL36 (41 aa).

Belongs to the bacterial ribosomal protein bL36 family.

The polypeptide is Large ribosomal subunit protein bL36 (Hydrogenovibrio crunogenus (strain DSM 25203 / XCL-2) (Thiomicrospira crunogena)).